A 154-amino-acid polypeptide reads, in one-letter code: Deoxyuridine 5'-triphosphate nucleotidohydrolase (154 aa).

Residues 72-74, Asn-85, 89-91, and Met-99 each bind substrate; these read RSG and LID.

It belongs to the dUTPase family. Mg(2+) serves as cofactor.

It catalyses the reaction dUTP + H2O = dUMP + diphosphate + H(+). It participates in pyrimidine metabolism; dUMP biosynthesis; dUMP from dCTP (dUTP route): step 2/2. In terms of biological role, this enzyme is involved in nucleotide metabolism: it produces dUMP, the immediate precursor of thymidine nucleotides and it decreases the intracellular concentration of dUTP so that uracil cannot be incorporated into DNA. The sequence is that of Deoxyuridine 5'-triphosphate nucleotidohydrolase from Psychrobacter sp. (strain PRwf-1).